We begin with the raw amino-acid sequence, 388 residues long: Chorismate synthase (388 aa).

NADP(+) contacts are provided by Arg-39 and Arg-45. Residues 130–132, 251–252, Gly-296, 311–315, and Arg-337 contribute to the FMN site; these read RSS, NA, and KPIPT.

It belongs to the chorismate synthase family. In terms of assembly, homotetramer. FMNH2 is required as a cofactor.

The catalysed reaction is 5-O-(1-carboxyvinyl)-3-phosphoshikimate = chorismate + phosphate. The protein operates within metabolic intermediate biosynthesis; chorismate biosynthesis; chorismate from D-erythrose 4-phosphate and phosphoenolpyruvate: step 7/7. Catalyzes the anti-1,4-elimination of the C-3 phosphate and the C-6 proR hydrogen from 5-enolpyruvylshikimate-3-phosphate (EPSP) to yield chorismate, which is the branch point compound that serves as the starting substrate for the three terminal pathways of aromatic amino acid biosynthesis. This reaction introduces a second double bond into the aromatic ring system. The polypeptide is Chorismate synthase (Streptococcus uberis (strain ATCC BAA-854 / 0140J)).